The following is a 1342-amino-acid chain: Receptor tyrosine-protein kinase erbB-3 (1342 aa).

Positions 1-19 are cleaved as a signal peptide; that stretch reads MRANDALQVLGLLFSLARG. Over 20-643 the chain is Extracellular; sequence SEVGNSQAVC…LVLIGKTHLT (624 aa). A disulfide bond links C29 and C56. N126 is a glycosylation site (N-linked (GlcNAc...) asparagine). Disulfide bonds link C156–C183, C186–C194, C190–C202, C210–C218, C214–C226, C227–C235, C231–C243, C246–C255, C259–C286, C290–C301, C305–C320, and C323–C327. N-linked (GlcNAc...) asparagine glycosylation is present at N250. N-linked (GlcNAc...) asparagine glycans are attached at residues N353, N408, N414, N437, and N469. Disulfide bonds link C500-C509, C504-C517, C520-C529, C533-C549, C552-C565, C556-C573, C576-C585, C589-C610, C613-C621, and C617-C629. N522 carries N-linked (GlcNAc...) asparagine glycosylation. The N-linked (GlcNAc...) asparagine glycan is linked to N566. The N-linked (GlcNAc...) asparagine glycan is linked to N616. The helical transmembrane segment at 644–664 threads the bilayer; that stretch reads MALTVIAGLVVIFMMLGGTFL. The Cytoplasmic portion of the chain corresponds to 665–1342; the sequence is YWRGRRIQNK…LFPKANAQRT (678 aa). Position 686 is a phosphoserine (S686). The region spanning 709–966 is the Protein kinase domain; that stretch reads LRKLKVLGSG…TFKELANEFT (258 aa). Residues 715–723, K742, 788–790, and 834–839 each bind ATP; these read LGSGVFGTV, QYL, and NLAARN. Residue N834 is the Proton acceptor of the active site. 2 disordered regions span residues 980-999 and 1033-1152; these read RESG…TNKK and LPVG…PGLE. A Phosphoserine modification is found at S982. A compositionally biased stretch (polar residues) spans 1042 to 1075; the sequence is RGSQSLLSPSSGYMPMNQGNLGESCQESAVSGSS.

The protein belongs to the protein kinase superfamily. Tyr protein kinase family. EGF receptor subfamily. As to quaternary structure, monomer and homodimer. Heterodimer with each of the other ERBB receptors (Potential). Interacts with CSPG5. Interacts with GRB7. Interacts with MUC1. Interacts with MYOC. Interacts with isoform 2 of PA2G4. Found in a ternary complex with NRG1 and ITGAV:ITGB3 or ITGA6:ITGB4. Autophosphorylated. Ligand-binding increases phosphorylation on tyrosine residues and promotes its association with the p85 subunit of phosphatidylinositol 3-kinase. As to expression, epithelial tissues and brain.

The protein localises to the cell membrane. The protein resides in the secreted. It carries out the reaction L-tyrosyl-[protein] + ATP = O-phospho-L-tyrosyl-[protein] + ADP + H(+). Its function is as follows. Tyrosine-protein kinase that plays an essential role as cell surface receptor for neuregulins. Binds to neuregulin-1 (NRG1) and is activated by it; ligand-binding increases phosphorylation on tyrosine residues and promotes its association with the p85 subunit of phosphatidylinositol 3-kinase. May also be activated by CSPG5. Involved in the regulation of myeloid cell differentiation. The polypeptide is Receptor tyrosine-protein kinase erbB-3 (ERBB3) (Homo sapiens (Human)).